The following is a 63-amino-acid chain: Hirudin-P6 (63 aa).

The tract at residues 1-3 (MRY) is interaction with thrombin active site. 3 disulfides stabilise this stretch: Cys6/Cys14, Cys16/Cys28, and Cys22/Cys37. Residues 35 to 55 (KKCVEGEGTRKPQNEGQHDFD) show a composition bias toward basic and acidic residues. The tract at residues 35–63 (KKCVEGEGTRKPQNEGQHDFDPIPEEYLS) is disordered. Thr43 carries an O-linked (GalNAc...) threonine glycan. Positions 53 to 63 (DFDPIPEEYLS) are interaction with fibrinogen-binding exosite of thrombin. Tyr61 is subject to Sulfotyrosine.

This sequence belongs to the protease inhibitor I14 (hirudin) family. O-linked glycan consists of Fuc-Gal-GalNAc trisaccharide.

It localises to the secreted. Its function is as follows. Hirudin is a potent thrombin-specific protease inhibitor. It forms a stable non-covalent complex with alpha-thrombin, thereby abolishing its ability to cleave fibrinogen. The protein is Hirudin-P6 of Hirudinaria manillensis (Asian medical leech).